The following is a 487-amino-acid chain: N-succinylglutamate 5-semialdehyde dehydrogenase (487 aa).

An NAD(+)-binding site is contributed by 221 to 226 (GSSDTG). Active-site residues include glutamate 244 and cysteine 278.

Belongs to the aldehyde dehydrogenase family. AstD subfamily.

The enzyme catalyses N-succinyl-L-glutamate 5-semialdehyde + NAD(+) + H2O = N-succinyl-L-glutamate + NADH + 2 H(+). The protein operates within amino-acid degradation; L-arginine degradation via AST pathway; L-glutamate and succinate from L-arginine: step 4/5. Catalyzes the NAD-dependent reduction of succinylglutamate semialdehyde into succinylglutamate. In Burkholderia vietnamiensis (strain G4 / LMG 22486) (Burkholderia cepacia (strain R1808)), this protein is N-succinylglutamate 5-semialdehyde dehydrogenase.